The sequence spans 183 residues: Capsid protein (183 aa).

Positions 136–183 are disordered; sequence NAPILSTLPETTVVRRRGRSPRRRTPSPRRRRSQSPRRRRSQSRESQC. Residues 149–176 show a composition bias toward basic residues; sequence VRRRGRSPRRRTPSPRRRRSQSPRRRRS. Residues serine 155, serine 162, and serine 170 each carry the phosphoserine; by host modification. One copy of the 1; half-length repeat lies at 155 to 161; it reads SPRRRTP. A 3 X 8 AA repeats of S-P-R-R-R-[PR]-S-Q region spans residues 155–177; sequence SPRRRTPSPRRRRSQSPRRRRSQ. A Bipartite nuclear localization signal motif is present at residues 158–175; the sequence is RRTPSPRRRRSQSPRRRR. 2 tandem repeats follow at residues 162–169 and 170–177. An RNA binding region spans residues 177 to 183; that stretch reads QSRESQC.

Belongs to the orthohepadnavirus core antigen family. As to quaternary structure, homodimerizes, then multimerizes. Interacts with cytosol exposed regions of viral L glycoprotein present in the reticulum-to-Golgi compartment. Interacts with human FLNB. Phosphorylated form interacts with host importin alpha; this interaction depends on the exposure of the NLS, which itself depends upon genome maturation and/or phosphorylation of the capsid protein. Interacts with host NUP153. Phosphorylated by host SRPK1, SRPK2, and maybe protein kinase C or GAPDH. Phosphorylation is critical for pregenomic RNA packaging. Protein kinase C phosphorylation is stimulated by HBx protein and may play a role in transport of the viral genome to the nucleus at the late step during the viral replication cycle.

It localises to the virion. The protein localises to the host cytoplasm. Its function is as follows. Self assembles to form an icosahedral capsid. Most capsids appear to be large particles with an icosahedral symmetry of T=4 and consist of 240 copies of capsid protein, though a fraction forms smaller T=3 particles consisting of 180 capsid proteins. Entering capsids are transported along microtubules to the nucleus. Phosphorylation of the capsid is thought to induce exposure of nuclear localization signal in the C-terminal portion of the capsid protein that allows binding to the nuclear pore complex via the importin (karyopherin-) alpha and beta. Capsids are imported in intact form through the nuclear pore into the nuclear basket, where it probably binds NUP153. Only capsids that contain the mature viral genome can release the viral DNA and capsid protein into the nucleoplasm. Immature capsids get stuck in the basket. Capsids encapsulate the pre-genomic RNA and the P protein. Pre-genomic RNA is reverse-transcribed into DNA while the capsid is still in the cytoplasm. The capsid can then either be directed to the nucleus, providing more genomes for transcription, or bud through the endoplasmic reticulum to provide new virions. The protein is Capsid protein of Hepatitis B virus genotype D subtype ayw (isolate Italy/CI/1992) (HBV-D).